Reading from the N-terminus, the 890-residue chain is Phosphotransferase RcsD (890 aa).

Topologically, residues 1-21 (MRQKETTATTRFSLLPGSITR) are cytoplasmic. Residues 22 to 42 (FFLLLIIVLLVTMGVMVQSAV) traverse the membrane as a helical segment. The Periplasmic segment spans residues 43-308 (NAWLKDKSYQ…GTLLLDTLQN (266 aa)). Residues 309 to 329 (ILLPLLLNIGLLALALFGYTT) traverse the membrane as a helical segment. The Cytoplasmic segment spans residues 330–890 (FRHFSSRSTE…DIDSYVKSLL (561 aa)). The tract at residues 468–678 (NIGDALKEPA…RYSVHIKMLA (211 aa)) is histidine-like kinase. In terms of domain architecture, HPt spans 803–890 (AQLHASGYYA…DIDSYVKSLL (88 aa)). Phosphohistidine is present on His842.

The protein belongs to the RcsD family. In terms of assembly, interacts with RcsC and RcsB. Has a higher affinity for RcsB than for RcsC. Post-translationally, phosphorylated by RcsC.

The protein localises to the cell inner membrane. In terms of biological role, component of the Rcs signaling system, which controls transcription of numerous genes. RcsD is a phosphotransfer intermediate between the sensor kinase RcsC and the response regulator RcsB. It acquires a phosphoryl group from RcsC and transfers it to RcsB. The system controls expression of genes involved in colanic acid capsule synthesis, biofilm formation and cell division. This chain is Phosphotransferase RcsD, found in Escherichia coli (strain K12).